The primary structure comprises 251 residues: Triosephosphate isomerase (251 aa).

9–11 (NWK) lines the substrate pocket. His-95 acts as the Electrophile in catalysis. The Proton acceptor role is filled by Glu-167. Substrate is bound by residues Gly-173, Ser-212, and 233 to 234 (GG).

The protein belongs to the triosephosphate isomerase family. As to quaternary structure, homodimer.

It localises to the cytoplasm. The catalysed reaction is D-glyceraldehyde 3-phosphate = dihydroxyacetone phosphate. Its pathway is carbohydrate biosynthesis; gluconeogenesis. It participates in carbohydrate degradation; glycolysis; D-glyceraldehyde 3-phosphate from glycerone phosphate: step 1/1. In terms of biological role, involved in the gluconeogenesis. Catalyzes stereospecifically the conversion of dihydroxyacetone phosphate (DHAP) to D-glyceraldehyde-3-phosphate (G3P). The sequence is that of Triosephosphate isomerase from Pseudomonas paraeruginosa (strain DSM 24068 / PA7) (Pseudomonas aeruginosa (strain PA7)).